We begin with the raw amino-acid sequence, 332 residues long: Transaldolase (332 aa).

Lysine 136 acts as the Schiff-base intermediate with substrate in catalysis.

The protein belongs to the transaldolase family. Type 1 subfamily.

It localises to the cytoplasm. The catalysed reaction is D-sedoheptulose 7-phosphate + D-glyceraldehyde 3-phosphate = D-erythrose 4-phosphate + beta-D-fructose 6-phosphate. It functions in the pathway carbohydrate degradation; pentose phosphate pathway; D-glyceraldehyde 3-phosphate and beta-D-fructose 6-phosphate from D-ribose 5-phosphate and D-xylulose 5-phosphate (non-oxidative stage): step 2/3. In terms of biological role, transaldolase is important for the balance of metabolites in the pentose-phosphate pathway. This is Transaldolase from Nostoc sp. (strain PCC 7120 / SAG 25.82 / UTEX 2576).